The sequence spans 345 residues: Glycerol-3-phosphate dehydrogenase [NAD(P)+] (345 aa).

NADPH is bound by residues S11, W12, R32, R33, and K105. Sn-glycerol 3-phosphate contacts are provided by K105, G136, and S138. Position 140 (A140) interacts with NADPH. Sn-glycerol 3-phosphate is bound by residues K191, D244, S254, R255, and N256. K191 (proton acceptor) is an active-site residue. Residue R255 coordinates NADPH. Residues V279 and E281 each coordinate NADPH.

Belongs to the NAD-dependent glycerol-3-phosphate dehydrogenase family.

It is found in the cytoplasm. The enzyme catalyses sn-glycerol 3-phosphate + NAD(+) = dihydroxyacetone phosphate + NADH + H(+). It catalyses the reaction sn-glycerol 3-phosphate + NADP(+) = dihydroxyacetone phosphate + NADPH + H(+). The protein operates within membrane lipid metabolism; glycerophospholipid metabolism. Functionally, catalyzes the reduction of the glycolytic intermediate dihydroxyacetone phosphate (DHAP) to sn-glycerol 3-phosphate (G3P), the key precursor for phospholipid synthesis. This chain is Glycerol-3-phosphate dehydrogenase [NAD(P)+], found in Halalkalibacterium halodurans (strain ATCC BAA-125 / DSM 18197 / FERM 7344 / JCM 9153 / C-125) (Bacillus halodurans).